We begin with the raw amino-acid sequence, 354 residues long: 4-hydroxy-3-methylbut-2-en-1-yl diphosphate synthase (flavodoxin) (354 aa).

[4Fe-4S] cluster contacts are provided by cysteine 263, cysteine 266, cysteine 298, and glutamate 305.

The protein belongs to the IspG family. [4Fe-4S] cluster serves as cofactor.

The enzyme catalyses (2E)-4-hydroxy-3-methylbut-2-enyl diphosphate + oxidized [flavodoxin] + H2O + 2 H(+) = 2-C-methyl-D-erythritol 2,4-cyclic diphosphate + reduced [flavodoxin]. It participates in isoprenoid biosynthesis; isopentenyl diphosphate biosynthesis via DXP pathway; isopentenyl diphosphate from 1-deoxy-D-xylulose 5-phosphate: step 5/6. Converts 2C-methyl-D-erythritol 2,4-cyclodiphosphate (ME-2,4cPP) into 1-hydroxy-2-methyl-2-(E)-butenyl 4-diphosphate. This chain is 4-hydroxy-3-methylbut-2-en-1-yl diphosphate synthase (flavodoxin), found in Fusobacterium nucleatum subsp. nucleatum (strain ATCC 25586 / DSM 15643 / BCRC 10681 / CIP 101130 / JCM 8532 / KCTC 2640 / LMG 13131 / VPI 4355).